A 297-amino-acid polypeptide reads, in one-letter code: Acetyl-coenzyme A carboxylase carboxyl transferase subunit beta (297 aa).

The segment at 1–23 (MSWIERILGRTSSSSSSSKSKVP) is disordered. In terms of domain architecture, CoA carboxyltransferase N-terminal spans 26-295 (VWTKCTSCEQ…PFKTAELIVE (270 aa)). Zn(2+) contacts are provided by Cys-30, Cys-33, Cys-49, and Cys-52. A C4-type zinc finger spans residues 30–52 (CTSCEQVLYSEELKRNMHVCPKC).

The protein belongs to the AccD/PCCB family. As to quaternary structure, acetyl-CoA carboxylase is a heterohexamer composed of biotin carboxyl carrier protein (AccB), biotin carboxylase (AccC) and two subunits each of ACCase subunit alpha (AccA) and ACCase subunit beta (AccD). Zn(2+) serves as cofactor.

The protein resides in the cytoplasm. The enzyme catalyses N(6)-carboxybiotinyl-L-lysyl-[protein] + acetyl-CoA = N(6)-biotinyl-L-lysyl-[protein] + malonyl-CoA. The protein operates within lipid metabolism; malonyl-CoA biosynthesis; malonyl-CoA from acetyl-CoA: step 1/1. Component of the acetyl coenzyme A carboxylase (ACC) complex. Biotin carboxylase (BC) catalyzes the carboxylation of biotin on its carrier protein (BCCP) and then the CO(2) group is transferred by the transcarboxylase to acetyl-CoA to form malonyl-CoA. This chain is Acetyl-coenzyme A carboxylase carboxyl transferase subunit beta, found in Actinobacillus pleuropneumoniae serotype 5b (strain L20).